The primary structure comprises 203 residues: Ras-related protein Rab-8B (203 aa).

GTP contacts are provided by residues 22-29, 70-74, and 128-131; these read GDSGVGKS, DTAGQ, and NKCD. Residues cysteine 202 and cysteine 203 are each lipidated (S-geranylgeranyl cysteine).

Belongs to the small GTPase superfamily. Rab family.

The protein resides in the cell membrane. Its function is as follows. Protein transport. Probably involved in vesicular traffic. The protein is Ras-related protein Rab-8B (rab8B) of Dictyostelium discoideum (Social amoeba).